The sequence spans 581 residues: Ezrin (581 aa).

Residues 2-295 (PKPINVRVTT…GNHELYMRRR (294 aa)) form the FERM domain. Lys-60 carries the N6-acetyllysine modification. The [IL]-x-C-x-x-[DE] motif motif lies at 115-120 (IYCPPE). At Tyr-146 the chain carries Phosphotyrosine; by PDGFR. The tract at residues 244-581 (EIRNISFNDK…KQRIDEFEAM (338 aa)) is interaction with SCYL3. Residues 302–462 (VQQMKAQARE…QDDLVKTREE (161 aa)) are a coiled coil. A disordered region spans residues 306-341 (KAQAREEKHQKQLERQQLETEKKRRETVEREKEQMM). Basic and acidic residues predominate over residues 308-341 (QAREEKHQKQLERQQLETEKKRRETVEREKEQMM). Tyr-354 carries the post-translational modification Phosphotyrosine; by PDGFR. At Ser-366 the chain carries Phosphoserine. Tyr-476 is subject to Phosphotyrosine. Residues 534-560 (SQARDENKRTHNDIIHNENMRQGRDKY) are disordered. Basic and acidic residues predominate over residues 535-560 (QARDENKRTHNDIIHNENMRQGRDKY). Thr-562 carries the phosphothreonine; by ROCK2 and PKC/PRKCI modification.

Interacts with PALS1 and NHERF2. Found in a complex with EZR, PODXL and NHERF2. Interacts with MCC, PLEKHG6, PODXL, SCYL3/PACE1, NHERF1 and TMEM8B. Interacts (when phosphorylated) with FES/FPS. Interacts with dimeric S100P, the interaction may be activating through unmasking of F-actin binding sites. Identified in complexes that contain VIM, EZR, AHNAK, BFSP1, BFSP2, ANK2, PLEC, PRX and spectrin. Detected in a complex composed of at least EZR, AHNAK, PPL and PRX. Interacts with PDPN (via cytoplasmic domain); activates RHOA and promotes epithelial-mesenchymal transition. Interacts with SPN/CD43 cytoplasmic tail, CD44 and ICAM2. Interacts with SLC9A3; interaction targets SLC9A3 to the apical membrane. Interacts with SLC9A1; regulates interactions of SLC9A1 with cytoskeletal and promotes stress fiber formation. Interacts with CLIC5; may work together in a complex which also includes RDX and MYO6 to stabilize linkages between the plasma membrane and subjacent actin cytoskeleton at the base of stereocilia. Post-translationally, phosphorylated by tyrosine-protein kinases. Phosphorylation by ROCK2 suppresses the head-to-tail association of the N-terminal and C-terminal halves resulting in an opened conformation which is capable of actin and membrane-binding. In terms of processing, S-nitrosylation is induced by interferon-gamma and oxidatively-modified low-densitity lipoprotein (LDL(ox)) possibly implicating the iNOS-S100A8/9 transnitrosylase complex. As to expression, detected in eye lens fiber cells (at protein level).

The protein resides in the apical cell membrane. It localises to the cell projection. The protein localises to the microvillus membrane. Its subcellular location is the ruffle membrane. It is found in the cytoplasm. The protein resides in the cell cortex. It localises to the cytoskeleton. The protein localises to the microvillus. A head-to-tail association, of the N-terminal and C-terminal halves results in a closed conformation (inactive form) which is incapable of actin or membrane-binding. Functionally, probably involved in connections of major cytoskeletal structures to the plasma membrane. In epithelial cells, required for the formation of microvilli and membrane ruffles on the apical pole. Along with PLEKHG6, required for normal macropinocytosis. This chain is Ezrin (EZR), found in Bos taurus (Bovine).